The chain runs to 160 residues: Aspartate 1-decarboxylase 2 (160 aa).

Ser25 serves as the catalytic Schiff-base intermediate with substrate; via pyruvic acid. Pyruvic acid (Ser) is present on Ser25. Substrate is bound at residue Thr57. Catalysis depends on Tyr58, which acts as the Proton donor. 73–75 serves as a coordination point for substrate; it reads GAA.

Belongs to the PanD family. As to quaternary structure, heterooctamer of four alpha and four beta subunits. Requires pyruvate as cofactor. In terms of processing, is synthesized initially as an inactive proenzyme, which is activated by self-cleavage at a specific serine bond to produce a beta-subunit with a hydroxyl group at its C-terminus and an alpha-subunit with a pyruvoyl group at its N-terminus.

It is found in the cytoplasm. The catalysed reaction is L-aspartate + H(+) = beta-alanine + CO2. It participates in cofactor biosynthesis; (R)-pantothenate biosynthesis; beta-alanine from L-aspartate: step 1/1. Catalyzes the pyruvoyl-dependent decarboxylation of aspartate to produce beta-alanine. The sequence is that of Aspartate 1-decarboxylase 2 from Frankia casuarinae (strain DSM 45818 / CECT 9043 / HFP020203 / CcI3).